Here is a 140-residue protein sequence, read N- to C-terminus: Nucleoside diphosphate kinase (140 aa).

Residues lysine 11, phenylalanine 59, arginine 87, threonine 93, arginine 104, and asparagine 114 each contribute to the ATP site. Histidine 117 functions as the Pros-phosphohistidine intermediate in the catalytic mechanism.

It belongs to the NDK family. In terms of assembly, homotetramer. Requires Mg(2+) as cofactor.

It localises to the cytoplasm. It carries out the reaction a 2'-deoxyribonucleoside 5'-diphosphate + ATP = a 2'-deoxyribonucleoside 5'-triphosphate + ADP. It catalyses the reaction a ribonucleoside 5'-diphosphate + ATP = a ribonucleoside 5'-triphosphate + ADP. Major role in the synthesis of nucleoside triphosphates other than ATP. The ATP gamma phosphate is transferred to the NDP beta phosphate via a ping-pong mechanism, using a phosphorylated active-site intermediate. The sequence is that of Nucleoside diphosphate kinase from Brucella melitensis biotype 1 (strain ATCC 23456 / CCUG 17765 / NCTC 10094 / 16M).